Here is a 300-residue protein sequence, read N- to C-terminus: Cis-3-alkyl-4-alkyloxetan-2-one decarboxylase (300 aa).

An AB hydrolase-1 domain is found at 33–282 (VVVMLHGNPS…DDANHYVLED (250 aa)).

It belongs to the AB hydrolase superfamily. In terms of assembly, homotetramer. Forms a complex with OleC and OleD.

Its subcellular location is the cytoplasm. The enzyme catalyses a cis-3-alkyl-4-alkyloxetan-2-one = a cis-alkene + CO2. Functionally, involved in olefin biosynthesis. Catalyzes the elimination of carbon dioxide from beta-lactones to form the final olefin product. The polypeptide is Cis-3-alkyl-4-alkyloxetan-2-one decarboxylase (Xanthomonas campestris pv. campestris (strain ATCC 33913 / DSM 3586 / NCPPB 528 / LMG 568 / P 25)).